Reading from the N-terminus, the 768-residue chain is DNA ligase (768 aa).

Residues 30-34, 79-80, and Glu-190 each bind NAD(+); these read DAEYD and SL. Lys-192 (N6-AMP-lysine intermediate) is an active-site residue. Positions 213, 250, 367, and 391 each coordinate NAD(+). Zn(2+) is bound by residues Cys-485, Cys-488, Cys-503, and Cys-509. Positions 678 to 767 constitute a BRCT domain; it reads AAEQPLSGLS…IPPEIQARMQ (90 aa).

The protein belongs to the NAD-dependent DNA ligase family. LigA subfamily. It depends on Mg(2+) as a cofactor. The cofactor is Mn(2+).

It catalyses the reaction NAD(+) + (deoxyribonucleotide)n-3'-hydroxyl + 5'-phospho-(deoxyribonucleotide)m = (deoxyribonucleotide)n+m + AMP + beta-nicotinamide D-nucleotide.. DNA ligase that catalyzes the formation of phosphodiester linkages between 5'-phosphoryl and 3'-hydroxyl groups in double-stranded DNA using NAD as a coenzyme and as the energy source for the reaction. It is essential for DNA replication and repair of damaged DNA. In Magnetococcus marinus (strain ATCC BAA-1437 / JCM 17883 / MC-1), this protein is DNA ligase.